We begin with the raw amino-acid sequence, 337 residues long: Protein RecA (337 aa).

66 to 73 (GPESSGKT) is a binding site for ATP.

Belongs to the RecA family.

It is found in the cytoplasm. Can catalyze the hydrolysis of ATP in the presence of single-stranded DNA, the ATP-dependent uptake of single-stranded DNA by duplex DNA, and the ATP-dependent hybridization of homologous single-stranded DNAs. It interacts with LexA causing its activation and leading to its autocatalytic cleavage. The protein is Protein RecA of Mesomycoplasma hyopneumoniae (strain 232) (Mycoplasma hyopneumoniae).